The sequence spans 457 residues: Siroheme synthase (457 aa).

The interval 1–204 (MDHLPIFCQL…NDQKAITETT (204 aa)) is precorrin-2 dehydrogenase /sirohydrochlorin ferrochelatase. NAD(+) is bound by residues 22–23 (DV) and 43–44 (LA). S128 carries the post-translational modification Phosphoserine. The uroporphyrinogen-III C-methyltransferase stretch occupies residues 216–457 (GEVVLVGAGP…RDKLNWFSNH (242 aa)). P225 contributes to the S-adenosyl-L-methionine binding site. The active-site Proton acceptor is D248. K270 functions as the Proton donor in the catalytic mechanism. S-adenosyl-L-methionine is bound by residues 301–303 (GGD), I306, 331–332 (TA), M382, and G411.

It in the N-terminal section; belongs to the precorrin-2 dehydrogenase / sirohydrochlorin ferrochelatase family. In the C-terminal section; belongs to the precorrin methyltransferase family.

The catalysed reaction is uroporphyrinogen III + 2 S-adenosyl-L-methionine = precorrin-2 + 2 S-adenosyl-L-homocysteine + H(+). It carries out the reaction precorrin-2 + NAD(+) = sirohydrochlorin + NADH + 2 H(+). It catalyses the reaction siroheme + 2 H(+) = sirohydrochlorin + Fe(2+). It functions in the pathway cofactor biosynthesis; adenosylcobalamin biosynthesis; precorrin-2 from uroporphyrinogen III: step 1/1. It participates in cofactor biosynthesis; adenosylcobalamin biosynthesis; sirohydrochlorin from precorrin-2: step 1/1. Its pathway is porphyrin-containing compound metabolism; siroheme biosynthesis; precorrin-2 from uroporphyrinogen III: step 1/1. The protein operates within porphyrin-containing compound metabolism; siroheme biosynthesis; siroheme from sirohydrochlorin: step 1/1. It functions in the pathway porphyrin-containing compound metabolism; siroheme biosynthesis; sirohydrochlorin from precorrin-2: step 1/1. Functionally, multifunctional enzyme that catalyzes the SAM-dependent methylations of uroporphyrinogen III at position C-2 and C-7 to form precorrin-2 via precorrin-1. Then it catalyzes the NAD-dependent ring dehydrogenation of precorrin-2 to yield sirohydrochlorin. Finally, it catalyzes the ferrochelation of sirohydrochlorin to yield siroheme. This is Siroheme synthase from Escherichia coli O8 (strain IAI1).